The sequence spans 210 residues: Large ribosomal subunit protein uL4 (210 aa).

Residues 41–52 (MNNARQGTASSK) are compositionally biased toward polar residues. The tract at residues 41-80 (MNNARQGTASSKTRSEVRGGGRKPWRQKGTGRARAGSSRS) is disordered. The span at 60 to 71 (GGRKPWRQKGTG) shows a compositional bias: basic residues.

Belongs to the universal ribosomal protein uL4 family. As to quaternary structure, part of the 50S ribosomal subunit.

Its function is as follows. One of the primary rRNA binding proteins, this protein initially binds near the 5'-end of the 23S rRNA. It is important during the early stages of 50S assembly. It makes multiple contacts with different domains of the 23S rRNA in the assembled 50S subunit and ribosome. Functionally, forms part of the polypeptide exit tunnel. In Acaryochloris marina (strain MBIC 11017), this protein is Large ribosomal subunit protein uL4.